An 88-amino-acid polypeptide reads, in one-letter code: Small ribosomal subunit protein uS15 (88 aa).

The protein belongs to the universal ribosomal protein uS15 family. In terms of assembly, part of the 30S ribosomal subunit. Forms a bridge to the 50S subunit in the 70S ribosome, contacting the 23S rRNA.

In terms of biological role, one of the primary rRNA binding proteins, it binds directly to 16S rRNA where it helps nucleate assembly of the platform of the 30S subunit by binding and bridging several RNA helices of the 16S rRNA. Forms an intersubunit bridge (bridge B4) with the 23S rRNA of the 50S subunit in the ribosome. The sequence is that of Small ribosomal subunit protein uS15 from Desulfitobacterium hafniense (strain Y51).